We begin with the raw amino-acid sequence, 256 residues long: 1-(5-phosphoribosyl)-5-[(5-phosphoribosylamino)methylideneamino] imidazole-4-carboxamide isomerase (256 aa).

The active-site Proton acceptor is the D8. Residue D129 is the Proton donor of the active site.

It belongs to the HisA/HisF family.

The protein resides in the cytoplasm. The enzyme catalyses 1-(5-phospho-beta-D-ribosyl)-5-[(5-phospho-beta-D-ribosylamino)methylideneamino]imidazole-4-carboxamide = 5-[(5-phospho-1-deoxy-D-ribulos-1-ylimino)methylamino]-1-(5-phospho-beta-D-ribosyl)imidazole-4-carboxamide. Its pathway is amino-acid biosynthesis; L-histidine biosynthesis; L-histidine from 5-phospho-alpha-D-ribose 1-diphosphate: step 4/9. The protein is 1-(5-phosphoribosyl)-5-[(5-phosphoribosylamino)methylideneamino] imidazole-4-carboxamide isomerase of Prochlorococcus marinus (strain NATL2A).